Here is a 62-residue protein sequence, read N- to C-terminus: Ferredoxin-2 (62 aa).

4Fe-4S ferredoxin-type domains lie at 2–28 (AHRI…SAGD) and 29–62 (SIYV…IIKV). The [4Fe-4S] cluster site is built by C9, C12, C15, C19, C38, C41, C50, and C54.

It depends on [4Fe-4S] cluster as a cofactor.

Ferredoxins are iron-sulfur proteins that transfer electrons in a wide variety of metabolic reactions. The protein is Ferredoxin-2 of Chlorobaculum tepidum (strain ATCC 49652 / DSM 12025 / NBRC 103806 / TLS) (Chlorobium tepidum).